A 422-amino-acid polypeptide reads, in one-letter code: Histidine--tRNA ligase (422 aa).

This sequence belongs to the class-II aminoacyl-tRNA synthetase family. In terms of assembly, homodimer.

It localises to the cytoplasm. It carries out the reaction tRNA(His) + L-histidine + ATP = L-histidyl-tRNA(His) + AMP + diphosphate + H(+). This is Histidine--tRNA ligase from Vibrio vulnificus (strain CMCP6).